A 353-amino-acid chain; its full sequence is tRNA N(3)-cytidine methyltransferase METTL2 (353 aa).

The tract at residues 1–37 (MAAPVVAADSPVIENMPETAGGATENSAEAQKRPQFG) is disordered. Positions 93, 97, 165, 190, 216, and 237 each coordinate S-adenosyl-L-methionine.

It belongs to the methyltransferase superfamily. METL family. As to quaternary structure, monomer.

It is found in the cytoplasm. It carries out the reaction cytidine(32) in tRNA(Thr) + S-adenosyl-L-methionine = N(3)-methylcytidine(32) in tRNA(Thr) + S-adenosyl-L-homocysteine + H(+). It catalyses the reaction cytidine(32) in tRNA(Arg)(CCU) + S-adenosyl-L-methionine = N(3)-methylcytidine(32) in tRNA(Arg)(CCU) + S-adenosyl-L-homocysteine + H(+). Its function is as follows. S-adenosyl-L-methionine-dependent methyltransferase that mediates N(3)-methylcytidine modification of residue 32 of the tRNA anticodon loop of tRNA(Thr)(UGU) and tRNA(Arg)(CCU). N(3)-methylcytidine methylation by mettl2a requires the N6-threonylcarbamoylation of tRNA (t6A37) by the EKC/KEOPS complex as prerequisite. This chain is tRNA N(3)-cytidine methyltransferase METTL2 (mettl2a), found in Danio rerio (Zebrafish).